Reading from the N-terminus, the 652-residue chain is O-fucosyltransferase 15 (652 aa).

A helical; Signal-anchor for type II membrane protein membrane pass occupies residues 91–111 (TAAFVIVLVGFFIFVNWFMLS). N139, N169, and N251 each carry an N-linked (GlcNAc...) asparagine glycan. 426–428 (HLR) provides a ligand contact to substrate. Residues N464, N546, and N607 are each glycosylated (N-linked (GlcNAc...) asparagine).

The protein belongs to the glycosyltransferase GT106 family.

It localises to the membrane. The protein operates within glycan metabolism. This Arabidopsis thaliana (Mouse-ear cress) protein is O-fucosyltransferase 15.